Consider the following 132-residue polypeptide: uncharacterized protein (132 aa).

4 helical membrane passes run 6–26 (WIYA…RAFS), 34–54 (NTYL…GFLF), 59–79 (TMIT…SQLY), and 106–126 (IEAY…VLGI).

It localises to the cell membrane. This is an uncharacterized protein from Bacillus subtilis (strain 168).